We begin with the raw amino-acid sequence, 315 residues long: Glycine--tRNA ligase alpha subunit (315 aa).

Belongs to the class-II aminoacyl-tRNA synthetase family. Tetramer of two alpha and two beta subunits.

It localises to the cytoplasm. The enzyme catalyses tRNA(Gly) + glycine + ATP = glycyl-tRNA(Gly) + AMP + diphosphate. This Pseudomonas putida (strain ATCC 47054 / DSM 6125 / CFBP 8728 / NCIMB 11950 / KT2440) protein is Glycine--tRNA ligase alpha subunit.